The sequence spans 287 residues: Ribosomal RNA small subunit methyltransferase I (287 aa).

The protein belongs to the methyltransferase superfamily. RsmI family.

It is found in the cytoplasm. The catalysed reaction is cytidine(1402) in 16S rRNA + S-adenosyl-L-methionine = 2'-O-methylcytidine(1402) in 16S rRNA + S-adenosyl-L-homocysteine + H(+). In terms of biological role, catalyzes the 2'-O-methylation of the ribose of cytidine 1402 (C1402) in 16S rRNA. This Streptococcus pyogenes serotype M6 (strain ATCC BAA-946 / MGAS10394) protein is Ribosomal RNA small subunit methyltransferase I.